A 384-amino-acid chain; its full sequence is Probable intron-encoded endonuclease Cox1-I1b (384 aa).

It belongs to the LAGLIDADG endonuclease family.

Its subcellular location is the mitochondrion. Its function is as follows. Probable mitochondrial DNA endonuclease involved in intron homing. This Schizosaccharomyces pombe (strain 972 / ATCC 24843) (Fission yeast) protein is Probable intron-encoded endonuclease Cox1-I1b (cox1-I1b).